The chain runs to 272 residues: 3-methyl-2-oxobutanoate hydroxymethyltransferase (272 aa).

Positions 51 and 90 each coordinate Mg(2+). Residues 51–52 (DS), D90, and K120 contribute to the 3-methyl-2-oxobutanoate site. Mg(2+) is bound at residue E122. Residue E189 is the Proton acceptor of the active site.

It belongs to the PanB family. As to quaternary structure, homodecamer; pentamer of dimers. Mg(2+) is required as a cofactor.

The protein localises to the cytoplasm. It catalyses the reaction 3-methyl-2-oxobutanoate + (6R)-5,10-methylene-5,6,7,8-tetrahydrofolate + H2O = 2-dehydropantoate + (6S)-5,6,7,8-tetrahydrofolate. The protein operates within cofactor biosynthesis; (R)-pantothenate biosynthesis; (R)-pantoate from 3-methyl-2-oxobutanoate: step 1/2. Functionally, catalyzes the reversible reaction in which hydroxymethyl group from 5,10-methylenetetrahydrofolate is transferred onto alpha-ketoisovalerate to form ketopantoate. In Syntrophus aciditrophicus (strain SB), this protein is 3-methyl-2-oxobutanoate hydroxymethyltransferase.